A 786-amino-acid polypeptide reads, in one-letter code: E3 ubiquitin-protein ligase UHRF1 (786 aa).

Positions 1–78 (MWIQVRTMDG…IQLLVRQSLV (78 aa)) constitute a Ubiquitin-like domain. A phosphoserine mark is found at Ser76, Ser98, and Ser102. The disordered stretch occupies residues 82-134 (PVPSSSGGSKERDSELSDTDSGCGLAQSESDKSSNSGEAANEPEGKADEDECD). Tudor-like regions lie at residues 139–213 (GLYK…ARAR) and 220–287 (DLQV…IERP). A Glycyl lysine isopeptide (Lys-Gly) (interchain with G-Cter in SUMO2) cross-link involves residue Lys283. The linker stretch occupies residues 300-305 (RKSGPS). A Phosphoserine; by PKA modification is found at Ser302. The PHD-type zinc-finger motif lies at 303 to 370 (GPSCKHCKDD…EWYCPDCRID (68 aa)). Histone H3R2me0 binding stretches follow at residues 337–341 (CDECD) and 357–359 (PPE). Phosphoserine is present on Ser372. A Glycyl lysine isopeptide (Lys-Gly) (interchain with G-Cter in SUMO2) cross-link involves residue Lys389. At Lys403 the chain carries N6-acetyllysine. Residues 423–586 (GPIPGIPVGT…FLVWRFLLRR (164 aa)) enclose the YDG domain. Positions 449 to 450 (HV) are required to promote base flipping. Residues 467–468 (AG) and Asp473 contribute to the DNA site. Required for formation of a 5-methylcytosine-binding pocket stretches follow at residues 470-473 (YEDD) and 482-485 (YTGS). Residue Lys550 is modified to N6-acetyllysine; alternate. Lys550 is covalently cross-linked (Glycyl lysine isopeptide (Lys-Gly) (interchain with G-Cter in SUMO2); alternate). The interval 626–679 (NSKQAALDKEEEDGEEGFTSPRKGKRKSKSAGGDGSSRGTPKKTKVEPYSLTTQ) is disordered. A Phosphoserine; by CDK1 modification is found at Ser645. Phosphoserine is present on residues Ser655 and Ser662. Lys670 participates in a covalent cross-link: Glycyl lysine isopeptide (Lys-Gly) (interchain with G-Cter in SUMO2). The RING-type zinc-finger motif lies at 717-756 (CICCQELVFRPITTVCQHNVCKDCLDRSFKAQVFSCPACR).

In terms of assembly, interacts with DNMT3A and DNMT3B. Interacts with DNMT1; the interaction is direct. Interacts with USP7; leading to its deubiquitination. Interacts with histone H3. Interacts with HDAC1, but not with HDAC2. Interacts with BLTP3A. Interacts with PML. Interacts with EHMT2. Binds methylated CpG containing oligonucleotides. Interacts with ZNF263; recruited to the SIX3 promoter along with other proteins involved in chromatin modification and transcriptional corepression where it contributes to transcriptional repression. Interacts with UHRF2. Interacts with FANCD2. Interacts with TET1 isoform 2; this interaction induces the recruitment of TET1 isoform 2 to replicating heterochromatin. In terms of processing, phosphorylation at Ser-302 of the linker region decreases the binding to H3K9me3. Phosphorylation at Ser-645 by CDK1 during M phase impairs interaction with USP7, preventing deubiquitination and leading to degradation by the proteasome. Post-translationally, ubiquitinated; which leads to proteasomal degradation. Autoubiquitinated; interaction with USP7 leads to deubiquitination and prevents degradation. Ubiquitination and degradation takes place during M phase, when phosphorylation at Ser-645 prevents interaction with USP7 and subsequent deubiquitination. Polyubiquitination may be stimulated by DNA damage.

The protein localises to the nucleus. The catalysed reaction is S-ubiquitinyl-[E2 ubiquitin-conjugating enzyme]-L-cysteine + [acceptor protein]-L-lysine = [E2 ubiquitin-conjugating enzyme]-L-cysteine + N(6)-ubiquitinyl-[acceptor protein]-L-lysine.. It functions in the pathway protein modification; protein ubiquitination. Its function is as follows. Multidomain protein that acts as a key epigenetic regulator by bridging DNA methylation and chromatin modification. Specifically recognizes and binds hemimethylated DNA at replication forks via its YDG domain and recruits DNMT1 methyltransferase to ensure faithful propagation of the DNA methylation patterns through DNA replication. In addition to its role in maintenance of DNA methylation, also plays a key role in chromatin modification: through its tudor-like regions and PHD-type zinc fingers, specifically recognizes and binds histone H3 trimethylated at 'Lys-9' (H3K9me3) and unmethylated at 'Arg-2' (H3R2me0), respectively, and recruits chromatin proteins. Enriched in pericentric heterochromatin where it recruits different chromatin modifiers required for this chromatin replication. Also localizes to euchromatic regions where it negatively regulates transcription possibly by impacting DNA methylation and histone modifications. Has E3 ubiquitin-protein ligase activity by mediating the ubiquitination of target proteins such as histone H3 and PML. It is still unclear how E3 ubiquitin-protein ligase activity is related to its role in chromatin in vivo. Plays a role in DNA repair by cooperating with UHRF2 to ensure recruitment of FANCD2 to interstrand cross-links (ICLs) leading to FANCD2 activation. Plays a pivotal role in the establishment of correct spindle architecture by catalyzing the 'Lys-63'-linked ubiquitination of KIF11, thereby controlling KIF11 localization on the spindle. This Bos taurus (Bovine) protein is E3 ubiquitin-protein ligase UHRF1 (UHRF1).